We begin with the raw amino-acid sequence, 265 residues long: Tryptophan 2,3-dioxygenase (265 aa).

Residues 38 to 42 (FIVVH) and R104 each bind substrate. Position 223 (H223) interacts with heme. T237 contributes to the substrate binding site.

It belongs to the tryptophan 2,3-dioxygenase family. In terms of assembly, homotetramer. Heme serves as cofactor.

It carries out the reaction L-tryptophan + O2 = N-formyl-L-kynurenine. It functions in the pathway amino-acid degradation; L-tryptophan degradation via kynurenine pathway; L-kynurenine from L-tryptophan: step 1/2. In terms of biological role, heme-dependent dioxygenase that catalyzes the oxidative cleavage of the L-tryptophan (L-Trp) pyrrole ring and converts L-tryptophan to N-formyl-L-kynurenine. Catalyzes the oxidative cleavage of the indole moiety. The protein is Tryptophan 2,3-dioxygenase of Anaeromyxobacter dehalogenans (strain 2CP-C).